We begin with the raw amino-acid sequence, 124 residues long: Aspartate 1-decarboxylase (124 aa).

Residue Ser-25 is the Schiff-base intermediate with substrate; via pyruvic acid of the active site. Ser-25 carries the pyruvic acid (Ser) modification. Residue Thr-57 coordinates substrate. Tyr-58 functions as the Proton donor in the catalytic mechanism. 71–73 (GAA) contacts substrate.

The protein belongs to the PanD family. In terms of assembly, heterooctamer of four alpha and four beta subunits. Pyruvate is required as a cofactor. Is synthesized initially as an inactive proenzyme, which is activated by self-cleavage at a specific serine bond to produce a beta-subunit with a hydroxyl group at its C-terminus and an alpha-subunit with a pyruvoyl group at its N-terminus.

It is found in the cytoplasm. It carries out the reaction L-aspartate + H(+) = beta-alanine + CO2. Its pathway is cofactor biosynthesis; (R)-pantothenate biosynthesis; beta-alanine from L-aspartate: step 1/1. In terms of biological role, catalyzes the pyruvoyl-dependent decarboxylation of aspartate to produce beta-alanine. The chain is Aspartate 1-decarboxylase from Bdellovibrio bacteriovorus (strain ATCC 15356 / DSM 50701 / NCIMB 9529 / HD100).